A 184-amino-acid chain; its full sequence is ADP-ribosylation factor-like protein 2 (184 aa).

Glycine 2 is lipidated: N-myristoyl glycine. Residues 23–30 (GLDNAGKT), 66–70 (DVGGQ), and 125–128 (NKQD) each bind GTP.

Belongs to the small GTPase superfamily. Arf family. Ubiquitously expressed.

In terms of biological role, GTP-binding protein involved in protein trafficking; may modulate vesicle budding and uncoating within the Golgi apparatus. This is ADP-ribosylation factor-like protein 2 (Arl2) from Drosophila melanogaster (Fruit fly).